We begin with the raw amino-acid sequence, 244 residues long: 1-(5-phosphoribosyl)-5-[(5-phosphoribosylamino)methylideneamino] imidazole-4-carboxamide isomerase (244 aa).

The active-site Proton acceptor is the D13. Residue D132 is the Proton donor of the active site.

Belongs to the HisA/HisF family.

It localises to the cytoplasm. The enzyme catalyses 1-(5-phospho-beta-D-ribosyl)-5-[(5-phospho-beta-D-ribosylamino)methylideneamino]imidazole-4-carboxamide = 5-[(5-phospho-1-deoxy-D-ribulos-1-ylimino)methylamino]-1-(5-phospho-beta-D-ribosyl)imidazole-4-carboxamide. It functions in the pathway amino-acid biosynthesis; L-histidine biosynthesis; L-histidine from 5-phospho-alpha-D-ribose 1-diphosphate: step 4/9. This is 1-(5-phosphoribosyl)-5-[(5-phosphoribosylamino)methylideneamino] imidazole-4-carboxamide isomerase from Renibacterium salmoninarum (strain ATCC 33209 / DSM 20767 / JCM 11484 / NBRC 15589 / NCIMB 2235).